Consider the following 356-residue polypeptide: Dynein regulatory complex protein 10 (356 aa).

Residues 126–167 (SNREFFEEVRDREERAVAEQEQLKQKLKLQRVELQKAAGTIQ) are a coiled coil. The interval 173-209 (ARGEVSEVQSSTQQSRAAIEGSARAQSEADKSSFQSD) is disordered. A compositionally biased stretch (low complexity) spans 178–187 (SEVQSSTQQS). Residues 197 to 287 (AQSEADKSSF…LRQLQEYNSG (91 aa)) adopt a coiled-coil conformation. The IQ domain maps to 319–348 (QNHAARVIQSYWRGFKKAREAAKKKAKKLE).

This sequence belongs to the DRC10 family. As to quaternary structure, component of the nexin-dynein regulatory complex (N-DRC).

It is found in the cytoplasm. Its subcellular location is the cytoskeleton. It localises to the flagellum axoneme. In terms of biological role, component of the nexin-dynein regulatory complex (N-DRC), a key regulator of ciliary/flagellar motility which maintains the alignment and integrity of the distal axoneme and regulates microtubule sliding in motile axonemes. The protein is Dynein regulatory complex protein 10 of Chlamydomonas reinhardtii (Chlamydomonas smithii).